Consider the following 58-residue polypeptide: Large ribosomal subunit protein bL32 (58 aa).

Belongs to the bacterial ribosomal protein bL32 family.

The polypeptide is Large ribosomal subunit protein bL32 (Caldicellulosiruptor saccharolyticus (strain ATCC 43494 / DSM 8903 / Tp8T 6331)).